The following is a 780-amino-acid chain: MLGESVPAAVEQEQLGEVKLEEEEAVSPEDPRRPESRLRPEVAHQLFRCFQYQEDMGPRASLSRLRELCGHWLRPALHTKKQILELLVLEQFLSVLPPHLLGRLQGQPLRDGEEVVLLLEGIHREPSHAGPLDFSCNAGKSCPRADVTLEEKGCASQVPSHSPKKELPAEEPSVLGPSDEPPRPQPRAAQPAEPGQWRLPPSSKQPLSPGPQKTFQALQESSPQGPSPWPEESSRDQELAAVLECLTFEDVPENKAWPAHPLGFGSRTPDKEEFKQEEPKGAAWPTPILAESQADSPGVPGEPCAQSLGRGAAASGPGEDGSLLGSSEILEVKVAEGVPEPNPELQFICADCGVSFPQLSRLKAHQLRSHPAGRSFLCLCCGKSFGRSSILKLHMRTHTDERPHACHLCGHRFRQSSHLSKHLLTHSSEPAFLCAECGRGFQRRASLVQHLLAHAQDQKPPCAPESKAEAPPLTDVLCSHCGQSFQRRSSLKRHLRIHARDKDRRSSEGSGSRRRDSDRRPFVCSDCGKAFRRSEHLVAHRRVHTGERPFSCQACGRSFTQSSQLVSHQRVHTGEKPYACPQCGKRFVRRASLARHLLTHGGPRPHHCTQCGKSFGQTQDLARHQRSHTGEKPCRCSECGEGFSQSAHLARHQRIHTGEKPHACDTCGHRFRNSSNLARHRRSHTGERPYSCQTCGRSFRRNAHLRRHLATHAEPGQEQAEPPQECVECGKSFSRSCNLLRHLLVHTGARPYSCTQCGRSFSRNSHLLRHLRTHARETLY.

The segment at methionine 1 to leucine 38 is disordered. Over residues glutamate 29–leucine 38 the composition is skewed to basic and acidic residues. The region spanning methionine 56–proline 126 is the SCAN box domain. 2 disordered regions span residues glycine 153 to glutamine 237 and lysine 255 to leucine 324. 2 positions are modified to phosphoserine: serine 162 and serine 208. Residues serine 202–glutamine 224 are compositionally biased toward polar residues. Residue threonine 268 is modified to Phosphothreonine. A compositionally biased stretch (basic and acidic residues) spans threonine 268–lysine 280. 14 consecutive C2H2-type zinc fingers follow at residues phenylalanine 347–histidine 370, phenylalanine 376–histidine 398, histidine 404–histidine 426, phenylalanine 432–histidine 454, valine 476–histidine 498, phenylalanine 522–histidine 544, phenylalanine 550–histidine 572, tyrosine 578–histidine 600, histidine 606–histidine 628, cysteine 634–histidine 656, histidine 662–histidine 684, tyrosine 690–histidine 712, glutamine 724–histidine 746, and tyrosine 752–histidine 774. At glutamine 483 the chain carries N5-methylglutamine. The disordered stretch occupies residues lysine 492–arginine 520. The span at histidine 498–arginine 520 shows a compositional bias: basic and acidic residues.

In terms of assembly, interacts with POU5F1/OCT4 and SOX2. Methylated at Gln-483 by N6AMT1.

The protein resides in the nucleus. Functionally, embryonic stem (ES) cell-specific transcription factor required to maintain ES cell pluripotency. Can both activate and /or repress expression of target genes, depending on the context. Specifically binds the 5'-[GA]CGCNNGCG[CT]-3' DNA consensus sequence. Regulates expression of POU5F1/OCT4, ZSCAN4 and ALYREF/THOC4. The protein is Zinc finger and SCAN domain-containing protein 10 (ZSCAN10) of Homo sapiens (Human).